A 233-amino-acid chain; its full sequence is Uridylate kinase (233 aa).

Residues 8-11, glycine 51, and arginine 55 each bind ATP; that span reads KLSG. UMP-binding positions include aspartate 68 and 129 to 136; that span reads TSNPFFTT. Positions 156, 162, and 165 each coordinate ATP.

Belongs to the UMP kinase family. Homohexamer.

The protein localises to the cytoplasm. It catalyses the reaction UMP + ATP = UDP + ADP. It functions in the pathway pyrimidine metabolism; CTP biosynthesis via de novo pathway; UDP from UMP (UMPK route): step 1/1. With respect to regulation, inhibited by UTP. In terms of biological role, catalyzes the reversible phosphorylation of UMP to UDP. This chain is Uridylate kinase, found in Pseudothermotoga lettingae (strain ATCC BAA-301 / DSM 14385 / NBRC 107922 / TMO) (Thermotoga lettingae).